Reading from the N-terminus, the 320-residue chain is Minor outer capsid protein P9 (320 aa).

Positions 297–320 (RNDDEEELAGSEFTSLLSDDGRMG) are disordered.

It belongs to the phytoreovirus minor outer capsid protein P9 family.

Its subcellular location is the virion. It localises to the host cytoplasm. In terms of biological role, minor outer capsid protein. The sequence is that of Minor outer capsid protein P9 from Rice gall dwarf virus (RGDV).